The following is an 833-amino-acid chain: Leucine--tRNA ligase (833 aa).

The 'HIGH' region signature appears at 41–52 (PYPSGAGLHVGH). The 'KMSKS' region motif lies at 610-614 (KMSKS). Lys613 is an ATP binding site.

Belongs to the class-I aminoacyl-tRNA synthetase family.

It is found in the cytoplasm. The catalysed reaction is tRNA(Leu) + L-leucine + ATP = L-leucyl-tRNA(Leu) + AMP + diphosphate. The protein is Leucine--tRNA ligase of Streptococcus thermophilus (strain CNRZ 1066).